The chain runs to 431 residues: Glutamate-1-semialdehyde 2,1-aminomutase (431 aa).

Residue Lys-269 is modified to N6-(pyridoxal phosphate)lysine.

This sequence belongs to the class-III pyridoxal-phosphate-dependent aminotransferase family. HemL subfamily. In terms of assembly, homodimer. Requires pyridoxal 5'-phosphate as cofactor.

It is found in the cytoplasm. It carries out the reaction (S)-4-amino-5-oxopentanoate = 5-aminolevulinate. It participates in porphyrin-containing compound metabolism; protoporphyrin-IX biosynthesis; 5-aminolevulinate from L-glutamyl-tRNA(Glu): step 2/2. The protein operates within porphyrin-containing compound metabolism; chlorophyll biosynthesis. This chain is Glutamate-1-semialdehyde 2,1-aminomutase, found in Prosthecochloris aestuarii (strain DSM 271 / SK 413).